Reading from the N-terminus, the 330-residue chain is Aspartate--ammonia ligase (330 aa).

It belongs to the class-II aminoacyl-tRNA synthetase family. AsnA subfamily.

The protein resides in the cytoplasm. It catalyses the reaction L-aspartate + NH4(+) + ATP = L-asparagine + AMP + diphosphate + H(+). The protein operates within amino-acid biosynthesis; L-asparagine biosynthesis; L-asparagine from L-aspartate (ammonia route): step 1/1. This chain is Aspartate--ammonia ligase, found in Haemophilus influenzae (strain 86-028NP).